The primary structure comprises 483 residues: MDLQQQPLFRQKALVAGQWCDADNAEKTPIFNPATQELIGYVPNMGRAETERAIEAAYASWEMWKTKTAKERSALLKKWYDLILLNLDVLAEILTTEQGKPFNEAKGEIIYAASFIEWFAEEAKRIYGDIIPSPYPDARIVVNKQPIGVVAAITPWNFPAAMITRKVAPALAAGCPCIVKPAPETPFTALALADLAIQAGIPAEIMSVVTGDAAQIGDAIFASDHVRKFTFTGSTPIGKLLLEKSAKTLKKVSLELGGNAPFIVFDDADIEAAVEGALIAKFRNAGQTCVCVNRFLVQSGVYEKFIQVFKAKIESLKIGNGLEAGSEIGPLINAQAVAKVQSHIEDALSKNGRLITGGQVHATGELFFEPTLIADANTEMMVATQETFGPLAAIFKFDTEQQAIQMANDTEFGLAAYCYTRDLGRAWRMSEQLEYGMVGINKGLISNEVAPFGGIKHSGLGREGSKYGIEDYLEIKYTLFGGL.

NAD(+) is bound by residues tryptophan 156–asparagine 157, lysine 180–proline 183, and glycine 233–serine 234. Glutamate 255 (proton acceptor) is an active-site residue. NAD(+) is bound at residue leucine 256. The Nucleophile role is filled by cysteine 289. Glutamate 386 serves as a coordination point for NAD(+).

Belongs to the aldehyde dehydrogenase family. Homotetramer.

The enzyme catalyses succinate semialdehyde + NAD(+) + H2O = succinate + NADH + 2 H(+). Its function is as follows. Involved in the degradation of the pyridine ring of trigonelline (TG; N-methylnicotinate) into succinate and methylamine as carbon and nitrogen sources, respectively. Catalyzes the NAD(+)-dependent oxidation of succinate semialdehyde to succinate. The protein is Succinate semialdehyde dehydrogenase of Acinetobacter baylyi (strain ATCC 33305 / BD413 / ADP1).